The following is a 503-amino-acid chain: Maturase K (503 aa).

The protein belongs to the intron maturase 2 family. MatK subfamily.

The protein resides in the plastid. Its subcellular location is the chloroplast. Usually encoded in the trnK tRNA gene intron. Probably assists in splicing its own and other chloroplast group II introns. This Rosa canina (Dog rose) protein is Maturase K.